Consider the following 473-residue polypeptide: Sulfhydrylase-like protein lolC1 (473 aa).

N6-(pyridoxal phosphate)lysine is present on lysine 226.

The protein belongs to the trans-sulfuration enzymes family. Requires pyridoxal 5'-phosphate as cofactor.

The protein operates within alkaloid biosynthesis. In terms of biological role, sulfhydrylase-like protein; part of the gene cluster that mediates the biosynthesis of loline alkaloids, potent insecticidal agents composed of a pyrrolizidine ring system and an uncommon ether bridge linking carbons 2 and 7. Lolines are structurally differentiated by the various modifications of the L-amino group and include norloline, loline, N-methylloline, N-acetylloline, N-acetylnorloline, and N-formylloline. The first committed step is the condensation of O-acetyl-L-homoserine (derived from L-aspartic acid) and L-proline, probably catalyzed by the gamma-type pyridoxal 5'-phosphate(PLP)-dependent enzyme lolC, to give the diamino diacid, NACPP. Ensuing cyclization, decarboxylation, and acetylation steps yield 1-exo-acetamidopyrrolizidine (AcAP). LolO is required for installation of the ether bridge upon the pathway intermediate, 1-exo-acetamidopyrrolizidine (AcAP). In sequential 2-oxoglutarate- and O(2)-consuming steps, lolO removes hydrogens from C2 and C7 of AcAP to form both carbon-oxygen bonds in N-acetylnorloline (NANL), the precursor to all other lolines. The enzymes lolD, lolE, lolF and lolT have also been proposed to be involved in the ether-bridge installation. Further processing of the exocyclic moiety of NANL by fungal N-acetamidase (LolN), methyltransferase (LolM), and cytochrome P450 (LolP) enzymes, with occasional involvement of a plant acetyltransferase, generates the other known lolines. LolN transforms NANL to norlonine which is monomethylated and dimethylated to respectively lonine and N-methyllonine (NML) by lolM. LolP catalyzes hydroxylation of the methyl group in N-methylloline (NML) and further oxygenation to N-formylloline (NFL). A plant acetyltransferase is responsible for the acetylation of loline to form N-acetylloline (NAL). LolA might interact with aspartate kinase to prevent feedback inhibition of its activity by these end products and thereby promote production of L-homoserine from L-aspartate. In Epichloe uncinata (Endophyte fungus), this protein is Sulfhydrylase-like protein lolC1.